Here is a 269-residue protein sequence, read N- to C-terminus: Putative hydro-lyase M446_2125 (269 aa).

The protein belongs to the D-glutamate cyclase family.

The protein is Putative hydro-lyase M446_2125 of Methylobacterium sp. (strain 4-46).